The sequence spans 218 residues: N-(5'-phosphoribosyl)anthranilate isomerase (218 aa).

Belongs to the TrpF family.

It catalyses the reaction N-(5-phospho-beta-D-ribosyl)anthranilate = 1-(2-carboxyphenylamino)-1-deoxy-D-ribulose 5-phosphate. It functions in the pathway amino-acid biosynthesis; L-tryptophan biosynthesis; L-tryptophan from chorismate: step 3/5. The protein is N-(5'-phosphoribosyl)anthranilate isomerase of Lachnoclostridium phytofermentans (strain ATCC 700394 / DSM 18823 / ISDg) (Clostridium phytofermentans).